A 296-amino-acid polypeptide reads, in one-letter code: uncharacterized protein (296 aa).

Disordered stretches follow at residues 1–45 (MSAT…LGEN) and 200–296 (EQVV…SESE). The span at 201–220 (QVVDDYPADSDDDTDAESDD) shows a compositional bias: acidic residues. The segment covering 236 to 249 (SSVSSCGSFITDGS) has biased composition (polar residues). Residues 250–296 (GSEESEDSASDETDDSDFDTDELTSESEEEESESESESESESESESE) are compositionally biased toward acidic residues.

This is an uncharacterized protein from Ictaluridae (bullhead catfishes).